The following is a 146-amino-acid chain: Cytidine deaminase (146 aa).

In terms of domain architecture, CMP/dCMP-type deaminase spans 13-140; that stretch reads ECVQQLLVCS…ELLPSSFGPE (128 aa). Residue 54–60 participates in substrate binding; that stretch reads NIENACY. Zn(2+) is bound at residue C65. E67 serves as the catalytic Proton donor. Residues C99 and C102 each coordinate Zn(2+).

This sequence belongs to the cytidine and deoxycytidylate deaminase family. In terms of assembly, homotetramer. It depends on Zn(2+) as a cofactor. In terms of tissue distribution, highly expressed in granulocytes while expression is very low in fibroblasts, chondrocytes, monocytes, and T- as well as B-cell lines.

It carries out the reaction cytidine + H2O + H(+) = uridine + NH4(+). It catalyses the reaction 2'-deoxycytidine + H2O + H(+) = 2'-deoxyuridine + NH4(+). This enzyme scavenges exogenous and endogenous cytidine and 2'-deoxycytidine for UMP synthesis. This chain is Cytidine deaminase, found in Homo sapiens (Human).